The sequence spans 132 residues: D-ribose pyranase (132 aa).

His20 acts as the Proton donor in catalysis. Substrate is bound by residues Asp28, His99, and 121–123; that span reads YSN.

Belongs to the RbsD / FucU family. RbsD subfamily. As to quaternary structure, homodecamer.

The protein localises to the cytoplasm. It carries out the reaction beta-D-ribopyranose = beta-D-ribofuranose. The protein operates within carbohydrate metabolism; D-ribose degradation; D-ribose 5-phosphate from beta-D-ribopyranose: step 1/2. Catalyzes the interconversion of beta-pyran and beta-furan forms of D-ribose. The sequence is that of D-ribose pyranase from Streptococcus agalactiae serotype Ia (strain ATCC 27591 / A909 / CDC SS700).